The following is a 227-amino-acid chain: UPF0173 metal-dependent hydrolase DR_0006 (227 aa).

Belongs to the UPF0173 family.

The polypeptide is UPF0173 metal-dependent hydrolase DR_0006 (Deinococcus radiodurans (strain ATCC 13939 / DSM 20539 / JCM 16871 / CCUG 27074 / LMG 4051 / NBRC 15346 / NCIMB 9279 / VKM B-1422 / R1)).